The chain runs to 650 residues: Acetyl-coenzyme A synthetase (650 aa).

CoA contacts are provided by residues 191–194 (RGGR), threonine 311, and asparagine 335. Residues 387-389 (GEP), 411-416 (DTWWQT), aspartate 500, and arginine 515 each bind ATP. Residue serine 523 participates in CoA binding. Arginine 526 is an ATP binding site. Residues valine 537, histidine 539, and valine 542 each coordinate Mg(2+). Arginine 584 provides a ligand contact to CoA. At lysine 609 the chain carries N6-acetyllysine.

Belongs to the ATP-dependent AMP-binding enzyme family. It depends on Mg(2+) as a cofactor. In terms of processing, acetylated. Deacetylation by the SIR2-homolog deacetylase activates the enzyme.

It carries out the reaction acetate + ATP + CoA = acetyl-CoA + AMP + diphosphate. Catalyzes the conversion of acetate into acetyl-CoA (AcCoA), an essential intermediate at the junction of anabolic and catabolic pathways. AcsA undergoes a two-step reaction. In the first half reaction, AcsA combines acetate with ATP to form acetyl-adenylate (AcAMP) intermediate. In the second half reaction, it can then transfer the acetyl group from AcAMP to the sulfhydryl group of CoA, forming the product AcCoA. This Shewanella putrefaciens (strain CN-32 / ATCC BAA-453) protein is Acetyl-coenzyme A synthetase.